A 1016-amino-acid chain; its full sequence is FHIP family protein Bm1_18400 (1016 aa).

Disordered regions lie at residues 586-608 and 757-778; these read DSLRQHTPPPELGEQESSSRSSF and SDGFKSDTNNDNDDEDPAPLGK.

This sequence belongs to the FHIP family.

The protein is FHIP family protein Bm1_18400 of Brugia malayi (Filarial nematode worm).